A 312-amino-acid chain; its full sequence is MEFNHVPVLLEETIENLNIKEDGIYVDCTLGGAGHSSEILKRLSSKGRLIGIDQDKDALKAASERLKEYKNLTFVHDNFSNIKNILEELKIDKVDGILADLGVSSYQLDEPERGFSYMNDAPLDMRMNRDSEFSAYDVINGYDEEKLYSIIKNYGEEKFAKRIAKFIVEKRSEEAINTTFELVDIIKAAIPAKFRRQGPHPAKRTFQAIRIEVNQELEILNKTIEDSVDKLKSEGRICIITFHSLEDRIVKNKYRELQDPCMCPKDIPMCVCGKKPKIKIITRKPIEASSYELEYNPRSRSAKLRVAEKINL.

Residues 33 to 35, D53, F79, D100, and Q107 contribute to the S-adenosyl-L-methionine site; that span reads AGH.

The protein belongs to the methyltransferase superfamily. RsmH family.

The protein localises to the cytoplasm. It catalyses the reaction cytidine(1402) in 16S rRNA + S-adenosyl-L-methionine = N(4)-methylcytidine(1402) in 16S rRNA + S-adenosyl-L-homocysteine + H(+). Its function is as follows. Specifically methylates the N4 position of cytidine in position 1402 (C1402) of 16S rRNA. In Clostridium acetobutylicum (strain ATCC 824 / DSM 792 / JCM 1419 / IAM 19013 / LMG 5710 / NBRC 13948 / NRRL B-527 / VKM B-1787 / 2291 / W), this protein is Ribosomal RNA small subunit methyltransferase H.